A 332-amino-acid chain; its full sequence is Ketol-acid reductoisomerase (NADP(+)) (332 aa).

The 181-residue stretch at 3–183 (TEIFYDADAD…GGARAGVIKT (181 aa)) folds into the KARI N-terminal Rossmann domain. NADP(+) contacts are provided by residues 26 to 29 (YGSQ), serine 52, serine 54, and 84 to 87 (DTKQ). Histidine 109 is an active-site residue. Glycine 135 serves as a coordination point for NADP(+). The region spanning 184 to 329 (TFTEETETDL…KKLRSLMSWT (146 aa)) is the KARI C-terminal knotted domain. Residues aspartate 192, glutamate 196, glutamate 228, and glutamate 232 each coordinate Mg(2+). Residue serine 253 coordinates substrate.

This sequence belongs to the ketol-acid reductoisomerase family. The cofactor is Mg(2+).

The enzyme catalyses (2R)-2,3-dihydroxy-3-methylbutanoate + NADP(+) = (2S)-2-acetolactate + NADPH + H(+). It catalyses the reaction (2R,3R)-2,3-dihydroxy-3-methylpentanoate + NADP(+) = (S)-2-ethyl-2-hydroxy-3-oxobutanoate + NADPH + H(+). The protein operates within amino-acid biosynthesis; L-isoleucine biosynthesis; L-isoleucine from 2-oxobutanoate: step 2/4. It participates in amino-acid biosynthesis; L-valine biosynthesis; L-valine from pyruvate: step 2/4. Involved in the biosynthesis of branched-chain amino acids (BCAA). Catalyzes an alkyl-migration followed by a ketol-acid reduction of (S)-2-acetolactate (S2AL) to yield (R)-2,3-dihydroxy-isovalerate. In the isomerase reaction, S2AL is rearranged via a Mg-dependent methyl migration to produce 3-hydroxy-3-methyl-2-ketobutyrate (HMKB). In the reductase reaction, this 2-ketoacid undergoes a metal-dependent reduction by NADPH to yield (R)-2,3-dihydroxy-isovalerate. This is Ketol-acid reductoisomerase (NADP(+)) from Saccharopolyspora erythraea (strain ATCC 11635 / DSM 40517 / JCM 4748 / NBRC 13426 / NCIMB 8594 / NRRL 2338).